The following is a 223-amino-acid chain: Glutathione S-transferase alpha I (223 aa).

M1 is subject to N-acetylmethionine. The residue at position 2 (A2) is an N-acetylalanine; in Glutathione S-transferase alpha I, N-terminally processed. Positions 3–83 (RKPLLHYFNG…YVANKHNLYG (81 aa)) constitute a GST N-terminal domain. K4 is subject to N6-succinyllysine. Glutathione contacts are provided by residues Y9, R45, 54 to 55 (QV), and 67 to 68 (QT). The region spanning 85-208 (DMKERALIDM…QPGSQRKPPM (124 aa)) is the GST C-terminal domain.

Belongs to the GST superfamily. Alpha family. In terms of assembly, homodimer or heterodimer of GSTA1 and GSTA2. In terms of tissue distribution, liver and lung.

Its subcellular location is the cytoplasm. The enzyme catalyses RX + glutathione = an S-substituted glutathione + a halide anion + H(+). It carries out the reaction prostaglandin A2 + glutathione = prostaglandin A2-S-(R)-glutathione. The catalysed reaction is prostaglandin J2 + glutathione = prostaglandin J2-S-(R)-glutathione. It catalyses the reaction (13S)-hydroperoxy-(9Z,11E)-octadecadienoate + 2 glutathione = (13S)-hydroxy-(9Z,11E)-octadecadienoate + glutathione disulfide + H2O. The enzyme catalyses androst-5-ene-3,17-dione = androst-4-ene-3,17-dione. In terms of biological role, glutathione S-transferase that catalyzes the nucleophilic attack of the sulfur atom of glutathione on the electrophilic groups of a wide range of exogenous and endogenous compounds. Involved in the formation of glutathione conjugates of both prostaglandin A2 (PGA2) and prostaglandin J2 (PGJ2). It also catalyzes the isomerization of D5-androstene-3,17-dione (AD) into D4-androstene-3,17-dione and may therefore play an important role in hormone biosynthesis. Through its glutathione-dependent peroxidase activity toward the fatty acid hydroperoxide (13S)-hydroperoxy-(9Z,11E)-octadecadienoate/13-HPODE it is also involved in the metabolism of oxidized linoleic acid. The sequence is that of Glutathione S-transferase alpha I from Oryctolagus cuniculus (Rabbit).